The following is a 237-amino-acid chain: MSIHISAKKGDIADKILLPGDPLRAKFIAENFLEDAVCFNEVRNMFGYTGTYKGHRVSVMGTGMGMPSISIYARELIVDYGVKTLIRVGTAGAIDPEVHVRELVLAQAAATNSNIIRNDFPEFDFPQIADFGLLDKAYHIAREMGVTTHVGNVLSSDVFYTNMPERNMVLGKLGVKAIEMEAAALYYLAAQHHVKALGIMTISDNLNDPTEDTTAEERQTTFTDMMKIGLETLIAND.

Histidine 4 provides a ligand contact to a purine D-ribonucleoside. Phosphate contacts are provided by residues glycine 20, arginine 24, arginine 43, and 87–90 (RVGT). A purine D-ribonucleoside contacts are provided by residues 179–181 (EME) and 203–204 (SD). Residue aspartate 204 is the Proton donor of the active site.

Belongs to the PNP/UDP phosphorylase family. Homohexamer; trimer of homodimers.

It carries out the reaction a purine D-ribonucleoside + phosphate = a purine nucleobase + alpha-D-ribose 1-phosphate. The catalysed reaction is a purine 2'-deoxy-D-ribonucleoside + phosphate = a purine nucleobase + 2-deoxy-alpha-D-ribose 1-phosphate. Its function is as follows. Catalyzes the reversible phosphorolytic breakdown of the N-glycosidic bond in the beta-(deoxy)ribonucleoside molecules, with the formation of the corresponding free purine bases and pentose-1-phosphate. This Streptococcus pyogenes serotype M4 (strain MGAS10750) protein is Purine nucleoside phosphorylase DeoD-type.